The following is a 186-amino-acid chain: MADFLIQPMVLWALRIFLALLFVAAALSKLRHVEEFYGVVRNFRVLPDLASRVVALVLPVVEAAVAVGLVVTPLAVPAAVAAAALLLVFAAALAINVLRGRTQIDCGCFRNGLKQPVSWLLVLRNLVLTALALAIATGLPAAVPASLTEGATGLLAGATAMLIYLSASLLGGLSAAQTANKTAKGR.

The next 5 helical transmembrane spans lie at 4–24, 53–73, 75–95, 127–147, and 153–173; these read FLIQPMVLWALRIFLALLFVA, VVALVLPVVEAAVAVGLVVTP, AVPAAVAAAALLLVFAAALAI, VLTALALAIATGLPAAVPASL, and GLLAGATAMLIYLSASLLGGL.

It localises to the cell membrane. It participates in one-carbon metabolism; methylamine degradation. May be specifically involved in the processing, transport, and/or maturation of the MADH beta-subunit. The polypeptide is Methylamine utilization protein MauE (mauE) (Paracoccus denitrificans).